The primary structure comprises 506 residues: Maturase K (506 aa).

Belongs to the intron maturase 2 family. MatK subfamily.

It is found in the plastid. The protein resides in the chloroplast. Functionally, usually encoded in the trnK tRNA gene intron. Probably assists in splicing its own and other chloroplast group II introns. The chain is Maturase K from Artanema fimbriatum.